Here is a 426-residue protein sequence, read N- to C-terminus: Serine--tRNA ligase (426 aa).

Threonine 233 to glutamate 235 serves as a coordination point for L-serine. Arginine 264 to glutamate 266 contacts ATP. Glutamate 287 is a binding site for L-serine. Residue glutamate 351–serine 354 coordinates ATP. Residue serine 387 coordinates L-serine.

This sequence belongs to the class-II aminoacyl-tRNA synthetase family. Type-1 seryl-tRNA synthetase subfamily. Homodimer. The tRNA molecule binds across the dimer.

It is found in the cytoplasm. The catalysed reaction is tRNA(Ser) + L-serine + ATP = L-seryl-tRNA(Ser) + AMP + diphosphate + H(+). It catalyses the reaction tRNA(Sec) + L-serine + ATP = L-seryl-tRNA(Sec) + AMP + diphosphate + H(+). The protein operates within aminoacyl-tRNA biosynthesis; selenocysteinyl-tRNA(Sec) biosynthesis; L-seryl-tRNA(Sec) from L-serine and tRNA(Sec): step 1/1. Its function is as follows. Catalyzes the attachment of serine to tRNA(Ser). Is also able to aminoacylate tRNA(Sec) with serine, to form the misacylated tRNA L-seryl-tRNA(Sec), which will be further converted into selenocysteinyl-tRNA(Sec). The sequence is that of Serine--tRNA ligase from Stenotrophomonas maltophilia (strain K279a).